Reading from the N-terminus, the 159-residue chain is 2-C-methyl-D-erythritol 2,4-cyclodiphosphate synthase (159 aa).

A divalent metal cation contacts are provided by Asp-10 and His-12. 4-CDP-2-C-methyl-D-erythritol 2-phosphate is bound by residues Asp-10 to His-12 and His-36 to Ser-37. His-44 is a binding site for a divalent metal cation. 4-CDP-2-C-methyl-D-erythritol 2-phosphate contacts are provided by residues Asp-58–Gly-60, Phe-63–Asp-67, Ala-102–Ala-108, Thr-134–Glu-137, Phe-141, and Arg-144.

This sequence belongs to the IspF family. Homotrimer. A divalent metal cation serves as cofactor.

The catalysed reaction is 4-CDP-2-C-methyl-D-erythritol 2-phosphate = 2-C-methyl-D-erythritol 2,4-cyclic diphosphate + CMP. It functions in the pathway isoprenoid biosynthesis; isopentenyl diphosphate biosynthesis via DXP pathway; isopentenyl diphosphate from 1-deoxy-D-xylulose 5-phosphate: step 4/6. Its function is as follows. Involved in the biosynthesis of isopentenyl diphosphate (IPP) and dimethylallyl diphosphate (DMAPP), two major building blocks of isoprenoid compounds. Catalyzes the conversion of 4-diphosphocytidyl-2-C-methyl-D-erythritol 2-phosphate (CDP-ME2P) to 2-C-methyl-D-erythritol 2,4-cyclodiphosphate (ME-CPP) with a corresponding release of cytidine 5-monophosphate (CMP). The protein is 2-C-methyl-D-erythritol 2,4-cyclodiphosphate synthase of Shewanella frigidimarina (strain NCIMB 400).